A 491-amino-acid chain; its full sequence is Glutamate--tRNA ligase (491 aa).

Residues 12-22 (PSPTGTPHVGL) carry the 'HIGH' region motif. The disordered stretch occupies residues 111 to 134 (STPEEVEERHKAAGRDPKLGYDNF). Over residues 117-134 (EERHKAAGRDPKLGYDNF) the composition is skewed to basic and acidic residues. The 'KMSKS' region signature appears at 256–260 (KLSKR). Lys259 lines the ATP pocket.

This sequence belongs to the class-I aminoacyl-tRNA synthetase family. Glutamate--tRNA ligase type 1 subfamily. As to quaternary structure, monomer.

Its subcellular location is the cytoplasm. The catalysed reaction is tRNA(Glu) + L-glutamate + ATP = L-glutamyl-tRNA(Glu) + AMP + diphosphate. Catalyzes the attachment of glutamate to tRNA(Glu) in a two-step reaction: glutamate is first activated by ATP to form Glu-AMP and then transferred to the acceptor end of tRNA(Glu). In Rhodococcus jostii (strain RHA1), this protein is Glutamate--tRNA ligase.